The chain runs to 92 residues: Large ribosomal subunit protein bL27 (92 aa).

Residues 1 to 8 (MLMNLQFF) constitute a propeptide that is removed on maturation. The interval 11-30 (HKGGGSTANGRDSAGRRLGA) is disordered.

The protein belongs to the bacterial ribosomal protein bL27 family. The N-terminus is cleaved by ribosomal processing cysteine protease Prp.

The sequence is that of Large ribosomal subunit protein bL27 from Lactiplantibacillus plantarum (strain ATCC BAA-793 / NCIMB 8826 / WCFS1) (Lactobacillus plantarum).